Consider the following 111-residue polypeptide: Rho GDP-dissociation inhibitor 1 (111 aa).

Residues Lys57 and Lys60 each participate in a glycyl lysine isopeptide (Lys-Gly) (interchain with G-Cter in SUMO1); alternate cross-link. Residues Lys57 and Lys60 each participate in a glycyl lysine isopeptide (Lys-Gly) (interchain with G-Cter in SUMO2); alternate cross-link. At Lys60 the chain carries N6-acetyllysine; alternate. Lys60 is modified (N6-succinyllysine; alternate).

This sequence belongs to the Rho GDI family. As to quaternary structure, monomer. Interacts with FER. Interacts with PLXNB3. Forms a heterodimer with RAC1. Interacts with RHOA, the affinity is increased by three orders of magnitude when RHOA is prenylated. Interacts with PSMD10; the interaction increases ARHGDIA association with RHOA, leading to ARHGDIA-mediated inactivation of RHOA and ROCK and prolonged AKT activation. Interacts with KANK2; the interaction is direct and may regulate the interaction of ARHGDIA with RHOA, RAC1 and CDC42. Interacts with RHOC. Interacts with CDC42. Interacts with NGFR (via death domain); NGFR binding decreases the affinity for RHOA. Post-translationally, the N-terminus is blocked.

The protein localises to the cytoplasm. Its function is as follows. Controls Rho proteins homeostasis. Regulates the GDP/GTP exchange reaction of the Rho proteins by inhibiting the dissociation of GDP from them, and the subsequent binding of GTP to them. Retains Rho proteins such as CDC42, RAC1 and RHOA in an inactive cytosolic pool, regulating their stability and protecting them from degradation. Actively involved in the recycling and distribution of activated Rho GTPases in the cell, mediates extraction from membranes of both inactive and activated molecules due its exceptionally high affinity for prenylated forms. Through the modulation of Rho proteins, may play a role in cell motility regulation. In glioma cells, inhibits cell migration and invasion by mediating the signals of SEMA5A and PLXNB3 that lead to inactivation of RAC1. In Cavia porcellus (Guinea pig), this protein is Rho GDP-dissociation inhibitor 1 (ARHGDIA).